Consider the following 159-residue polypeptide: Phosphopantetheine adenylyltransferase (159 aa).

Serine 9 serves as a coordination point for substrate. ATP contacts are provided by residues 9-10 (SF) and histidine 17. The substrate site is built by lysine 41, isoleucine 75, and lysine 89. ATP-binding positions include 90–92 (GLR), glutamate 100, and 124–130 (LEHISSS).

The protein belongs to the bacterial CoaD family. As to quaternary structure, homohexamer. Mg(2+) serves as cofactor.

The protein localises to the cytoplasm. The enzyme catalyses (R)-4'-phosphopantetheine + ATP + H(+) = 3'-dephospho-CoA + diphosphate. It functions in the pathway cofactor biosynthesis; coenzyme A biosynthesis; CoA from (R)-pantothenate: step 4/5. In terms of biological role, reversibly transfers an adenylyl group from ATP to 4'-phosphopantetheine, yielding dephospho-CoA (dPCoA) and pyrophosphate. This is Phosphopantetheine adenylyltransferase from Bifidobacterium animalis subsp. lactis (strain AD011).